The primary structure comprises 131 residues: Small ribosomal subunit protein uS8 (131 aa).

This sequence belongs to the universal ribosomal protein uS8 family. As to quaternary structure, part of the 30S ribosomal subunit. Contacts proteins S5 and S12.

Its function is as follows. One of the primary rRNA binding proteins, it binds directly to 16S rRNA central domain where it helps coordinate assembly of the platform of the 30S subunit. The polypeptide is Small ribosomal subunit protein uS8 (Campylobacter jejuni subsp. jejuni serotype O:23/36 (strain 81-176)).